A 1133-amino-acid polypeptide reads, in one-letter code: MSHAPRYAELRCKSCFSFLEGASHPEELVGRAAELGLSALALADVNGLYGIVRAHAEAKRQGLPLIVGAELVVAGLAPGRPARLVLLAQDREGYAGLCRLVTRAHCGEGWTGAPERRERDAVAVPFEAVAAGARGLFALYPGADGDAVARLKDAFGRRAALAVARHRVAGEEARVLAARSAGRRLGVPVAVTNDVHTHARARQVLQDVLTCVRHGTTVDRAGRRLFPNAERTLKGPEELARLWSDFPEGLAAAADIADQCRFRMEAIRGEHPLPPVVVERGALAGGVEVATSSPAQAAREGARTATPSLSLRASLPAERPAAPAIEGCAASGPGLPAAGAGGGAAAAAATDRDGALAGMSLLRELVREGARWRYGGEPPEDVARQLARELELVESLGYASYFLTVWDVVRFARSRGILCQGRGSAANSAVCYVLGITSIDPVRMGLLFERFISAERGEPPDIDVDFEHERREEVLQYVYQRYGRDRAGMVCEVITYRGKSALRDVGKALGLSLGQVDRLAKLIGTYEDLGQVGPELLAQAGLDAADSERVRMTLALARELQGFPRHLSIHVGGFVITRRPLCETVPIEPAAMPGRTIVQWDKDDLAELDLLKVDLLGLGMLTALSRALALLARHRPAPASPTAVPHPDALATIPAEDPEVYEMLGRADSIGVFQVESRAQMSLAPRLRPRNFYDLVISVAIIRPGPIQGGMIHPYLRRRDGKEQVRYPYAPLEPVLARTLGVPLFQEQAMRLAVIAAGFTPGEADELRRVMTHRRSHEKLAAMKARLVAGMAERGISGADAEEIFKQLLGFAGYGFPESHAASFALLVYASAWLKRYHPAAFACALLNSQPMGFYAPHTLVEDAKRHGVEVRGVDVGCSGWESSLEGAAPGRPAAPGETAVLRVGLHAVRGLPRAVGEAILEARAAGPFGSVAELVRRARLSRAWLVRLAEAGALGALAPDRRDAVWRSLAVEADGGDLFAGLAPPEPEVALPAASAADEVSADFATTGLSVRGHPMALVRPGLGGDRIRTARELGRLPDRAPVEVAGLVIVRQRPETARGIVFVSLEDETGIANLVVMPDVYERFRPVVRGAPFLLARGRVERSGKVVNVRVDSVAPLALAPATGARARDFH.

The protein belongs to the DNA polymerase type-C family. DnaE2 subfamily.

It is found in the cytoplasm. It catalyses the reaction DNA(n) + a 2'-deoxyribonucleoside 5'-triphosphate = DNA(n+1) + diphosphate. DNA polymerase involved in damage-induced mutagenesis and translesion synthesis (TLS). It is not the major replicative DNA polymerase. This is Error-prone DNA polymerase from Anaeromyxobacter sp. (strain K).